We begin with the raw amino-acid sequence, 176 residues long: Macro domain-containing protein lmo2759 (176 aa).

The Macro domain occupies 1 to 175 (MEITIVKGDI…LYNKLINSEV (175 aa)).

This sequence belongs to the MacroD-type family.

This is Macro domain-containing protein lmo2759 from Listeria monocytogenes serovar 1/2a (strain ATCC BAA-679 / EGD-e).